The following is a 944-amino-acid chain: Neutral alpha-glucosidase AB (944 aa).

Residues methionine 1–glycine 28 form the signal peptide. A disulfide bridge connects residues cysteine 41 and cysteine 47. Serine 52 is modified (phosphoserine). N-linked (GlcNAc...) asparagine glycosylation occurs at asparagine 97. Residues glutamine 181–proline 238 form a disordered region. Positions glutamate 203–serine 236 are enriched in basic and acidic residues. 2 residues coordinate substrate: aspartate 283 and aspartate 429. Aspartate 542 acts as the Nucleophile in catalysis. Arginine 602 lines the substrate pocket. The active-site Proton donor is aspartate 618. An intrachain disulfide couples cysteine 633 to cysteine 644. Residue histidine 676 coordinates substrate.

Belongs to the glycosyl hydrolase 31 family. Heterodimer of a catalytic alpha subunit (GANAB) and a beta subunit (PRKCSH). Binds glycosylated PTPRC. Detected in placenta. Isoform 1 and isoform 2 are expressed in the kidney and liver.

It localises to the endoplasmic reticulum. It is found in the golgi apparatus. The protein resides in the melanosome. The enzyme catalyses N(4)-(alpha-D-Glc-(1-&gt;3)-alpha-D-Man-(1-&gt;2)-alpha-D-Man-(1-&gt;2)-alpha-D-Man-(1-&gt;3)-[alpha-D-Man-(1-&gt;2)-alpha-D-Man-(1-&gt;3)-[alpha-D-Man-(1-&gt;2)-alpha-D-Man-(1-&gt;6)]-alpha-D-Man-(1-&gt;6)]-beta-D-Man-(1-&gt;4)-beta-D-GlcNAc-(1-&gt;4)-beta-D-GlcNAc)-L-asparaginyl-[protein] + H2O = N(4)-(alpha-D-Man-(1-&gt;2)-alpha-D-Man-(1-&gt;2)-alpha-D-Man-(1-&gt;3)-[alpha-D-Man-(1-&gt;2)-alpha-D-Man-(1-&gt;3)-[alpha-D-Man-(1-&gt;2)-alpha-D-Man-(1-&gt;6)]-alpha-D-Man-(1-&gt;6)]-beta-D-Man-(1-&gt;4)-beta-D-GlcNAc-(1-&gt;4)-beta-D-GlcNAc)-L-asparaginyl-[protein] (N-glucan mannose isomer 9A1,2,3B1,2,3) + beta-D-glucose. The catalysed reaction is N(4)-(alpha-D-Glc-(1-&gt;3)-alpha-D-Glc-(1-&gt;3)-alpha-D-Man-(1-&gt;2)-alpha-D-Man-(1-&gt;2)-alpha-D-Man-(1-&gt;3)-[alpha-D-Man-(1-&gt;2)-alpha-D-Man-(1-&gt;3)-[alpha-D-Man-(1-&gt;2)-alpha-D-Man-(1-&gt;6)]-alpha-D-Man-(1-&gt;6)]-beta-D-Man-(1-&gt;4)-beta-D-GlcNAc-(1-&gt;4)-beta-D-GlcNAc)-L-asparaginyl-[protein] + H2O = N(4)-(alpha-D-Glc-(1-&gt;3)-alpha-D-Man-(1-&gt;2)-alpha-D-Man-(1-&gt;2)-alpha-D-Man-(1-&gt;3)-[alpha-D-Man-(1-&gt;2)-alpha-D-Man-(1-&gt;3)-[alpha-D-Man-(1-&gt;2)-alpha-D-Man-(1-&gt;6)]-alpha-D-Man-(1-&gt;6)]-beta-D-Man-(1-&gt;4)-beta-D-GlcNAc-(1-&gt;4)-beta-D-GlcNAc)-L-asparaginyl-[protein] + beta-D-glucose. The protein operates within glycan metabolism; N-glycan metabolism. With respect to regulation, inhibited by deoxynojirimycin. Its function is as follows. Catalytic subunit of glucosidase II that cleaves sequentially the 2 innermost alpha-1,3-linked glucose residues from the Glc(2)Man(9)GlcNAc(2) oligosaccharide precursor of immature glycoproteins. Required for PKD1/Polycystin-1 and PKD2/Polycystin-2 maturation and localization to the cell surface and cilia. This Homo sapiens (Human) protein is Neutral alpha-glucosidase AB.